The following is a 291-amino-acid chain: Porphobilinogen deaminase (291 aa).

Cys-237 is subject to S-(dipyrrolylmethanemethyl)cysteine.

This sequence belongs to the HMBS family. Monomer. Requires dipyrromethane as cofactor.

It catalyses the reaction 4 porphobilinogen + H2O = hydroxymethylbilane + 4 NH4(+). Its pathway is porphyrin-containing compound metabolism; protoporphyrin-IX biosynthesis; coproporphyrinogen-III from 5-aminolevulinate: step 2/4. Tetrapolymerization of the monopyrrole PBG into the hydroxymethylbilane pre-uroporphyrinogen in several discrete steps. The sequence is that of Porphobilinogen deaminase from Clostridium acetobutylicum (strain ATCC 824 / DSM 792 / JCM 1419 / IAM 19013 / LMG 5710 / NBRC 13948 / NRRL B-527 / VKM B-1787 / 2291 / W).